The sequence spans 96 residues: CRISPR-associated endoribonuclease Cas2 1 (96 aa).

Position 8 (Asp8) interacts with Mg(2+).

The protein belongs to the CRISPR-associated endoribonuclease Cas2 protein family. Homodimer, forms a heterotetramer with a Cas1 homodimer. Mg(2+) serves as cofactor.

In terms of biological role, CRISPR (clustered regularly interspaced short palindromic repeat), is an adaptive immune system that provides protection against mobile genetic elements (viruses, transposable elements and conjugative plasmids). CRISPR clusters contain sequences complementary to antecedent mobile elements and target invading nucleic acids. CRISPR clusters are transcribed and processed into CRISPR RNA (crRNA). Functions as a ssRNA-specific endoribonuclease. Involved in the integration of spacer DNA into the CRISPR cassette. The protein is CRISPR-associated endoribonuclease Cas2 1 of Moorella thermoacetica (strain ATCC 39073 / JCM 9320).